A 287-amino-acid polypeptide reads, in one-letter code: Polyamine aminopropyltransferase (287 aa).

Residues 5 to 238 (ETWHETLHDH…GIMTFAWASQ (234 aa)) form the PABS domain. Position 33 (Gln-33) interacts with S-methyl-5'-thioadenosine. 2 residues coordinate spermidine: His-64 and Asp-88. Residues Glu-108 and 140–141 (DG) each bind S-methyl-5'-thioadenosine. Asp-158 (proton acceptor) is an active-site residue. 158-161 (DCTD) serves as a coordination point for spermidine. Pro-165 is a binding site for S-methyl-5'-thioadenosine.

It belongs to the spermidine/spermine synthase family. As to quaternary structure, homodimer or homotetramer.

It is found in the cytoplasm. The catalysed reaction is S-adenosyl 3-(methylsulfanyl)propylamine + putrescine = S-methyl-5'-thioadenosine + spermidine + H(+). Its pathway is amine and polyamine biosynthesis; spermidine biosynthesis; spermidine from putrescine: step 1/1. Functionally, catalyzes the irreversible transfer of a propylamine group from the amino donor S-adenosylmethioninamine (decarboxy-AdoMet) to putrescine (1,4-diaminobutane) to yield spermidine. In Sodalis glossinidius (strain morsitans), this protein is Polyamine aminopropyltransferase.